Here is a 159-residue protein sequence, read N- to C-terminus: Cytochrome c-type biogenesis protein CcmE (159 aa).

Residues methionine 1 to arginine 8 are Cytoplasmic-facing. Residues leucine 9 to alanine 29 form a helical; Signal-anchor for type II membrane protein membrane-spanning segment. Residues leucine 30–serine 159 lie on the Periplasmic side of the membrane. Residues lysine 129 to serine 159 are disordered. Positions 130 and 134 each coordinate heme.

The protein belongs to the CcmE/CycJ family.

It is found in the cell inner membrane. Functionally, heme chaperone required for the biogenesis of c-type cytochromes. Transiently binds heme delivered by CcmC and transfers the heme to apo-cytochromes in a process facilitated by CcmF and CcmH. The protein is Cytochrome c-type biogenesis protein CcmE of Salmonella paratyphi A (strain ATCC 9150 / SARB42).